The sequence spans 150 residues: uncharacterized protein (150 aa).

This is an uncharacterized protein from Acidianus bottle-shaped virus (isolate Italy/Pozzuoli) (ABV).